A 123-amino-acid polypeptide reads, in one-letter code: Basic phospholipase A2 Ph-TX1 (123 aa).

Ca(2+) is bound by residues Tyr-27, Gly-29, and Gly-31. Cystine bridges form between Cys-28-Cys-45, Cys-44-Cys-96, Cys-50-Cys-123, Cys-51-Cys-89, Cys-59-Cys-83, and Cys-77-Cys-87. Residue His-48 is part of the active site. Ca(2+) is bound at residue Asp-49. Residue Asp-90 is part of the active site.

This sequence belongs to the phospholipase A2 family. Group II subfamily. D49 sub-subfamily. In terms of assembly, monomer. The cofactor is Ca(2+). As to expression, expressed by the venom gland.

It is found in the secreted. The enzyme catalyses a 1,2-diacyl-sn-glycero-3-phosphocholine + H2O = a 1-acyl-sn-glycero-3-phosphocholine + a fatty acid + H(+). Inhibited by divalent cations different from calcium ions (cadmium, magnesium, manganese, zinc), since they act as competitive antagonists of this cofactor. Snake venom phospholipase A2 (PLA2) that induces in vivo myotoxicity, moderates footpad edema, and causes in vitro neuromuscular blockade. PLA2 catalyzes the calcium-dependent hydrolysis of the 2-acyl groups in 3-sn-phosphoglycerides. The polypeptide is Basic phospholipase A2 Ph-TX1 (Bothrocophias hyoprora (Amazonian hognose viper)).